The sequence spans 404 residues: Acetate kinase (404 aa).

Asn7 contacts Mg(2+). Lys14 lines the ATP pocket. A substrate-binding site is contributed by Arg98. The active-site Proton donor/acceptor is Asp155. ATP is bound by residues 214–218 (HLGNG), 289–291 (DLR), and 337–341 (GIGEN). Residue Glu390 coordinates Mg(2+).

This sequence belongs to the acetokinase family. In terms of assembly, homodimer. Requires Mg(2+) as cofactor. The cofactor is Mn(2+).

It localises to the cytoplasm. The enzyme catalyses acetate + ATP = acetyl phosphate + ADP. It functions in the pathway metabolic intermediate biosynthesis; acetyl-CoA biosynthesis; acetyl-CoA from acetate: step 1/2. Catalyzes the formation of acetyl phosphate from acetate and ATP. Can also catalyze the reverse reaction. This is Acetate kinase from Rippkaea orientalis (strain PCC 8801 / RF-1) (Cyanothece sp. (strain PCC 8801)).